The chain runs to 272 residues: NAD kinase (272 aa).

Aspartate 50 acts as the Proton acceptor in catalysis. NAD(+) is bound by residues 50–51 (DG), 126–127 (NE), arginine 152, aspartate 154, 165–170 (TAYNKS), and alanine 189.

This sequence belongs to the NAD kinase family. Requires a divalent metal cation as cofactor.

Its subcellular location is the cytoplasm. It carries out the reaction NAD(+) + ATP = ADP + NADP(+) + H(+). Involved in the regulation of the intracellular balance of NAD and NADP, and is a key enzyme in the biosynthesis of NADP. Catalyzes specifically the phosphorylation on 2'-hydroxyl of the adenosine moiety of NAD to yield NADP. The polypeptide is NAD kinase (Streptococcus pneumoniae (strain Hungary19A-6)).